We begin with the raw amino-acid sequence, 345 residues long: NADH-quinone oxidoreductase subunit H (345 aa).

Helical transmembrane passes span 15 to 35 (MLLQ…FMVY), 82 to 102 (FVYF…FVVI), 115 to 135 (VGIL…IMGG), 161 to 181 (LGLI…TAIV), 190 to 210 (LLNW…VSAL), 240 to 262 (YLLF…SLLF), 278 to 298 (WWMV…KAIV), and 309 to 329 (IGWK…AILA).

This sequence belongs to the complex I subunit 1 family. In terms of assembly, NDH-1 is composed of at least 14 different subunits, Nqo1 to Nqo14. The complex has a L-shaped structure, with the hydrophobic arm (subunits Nqo7, Nqo8, Nqo10 to Nqo14) embedded in the inner membrane and the hydrophilic peripheral arm (subunits Nqo1 to Nqo6, Nqo9) protruding into the bacterial cytoplasm. The hydrophilic domain contains all the redox centers. NADH-quinone oxidoreductase forms a supercomplex with ubiquinol-cytochrome c reductase complex (complex III or cytochrome b-c1 complex) and cytochrome c oxidase (complex IV), which stabilizes the NADH-quinone oxidoreductase complex.

It is found in the cell inner membrane. The catalysed reaction is a quinone + NADH + 5 H(+)(in) = a quinol + NAD(+) + 4 H(+)(out). NDH-1 shuttles electrons from NADH, via FMN and iron-sulfur (Fe-S) centers, to quinones in the respiratory chain. The immediate electron acceptor for the enzyme in this species is believed to be ubiquinone. Couples the redox reaction to proton translocation (for every two electrons transferred, four hydrogen ions are translocated across the cytoplasmic membrane), and thus conserves the redox energy in a proton gradient. This subunit may bind ubiquinone. This chain is NADH-quinone oxidoreductase subunit H, found in Paracoccus denitrificans (strain Pd 1222).